Reading from the N-terminus, the 1133-residue chain is SH3 and PX domain-containing protein 2A (1133 aa).

The PX domain occupies tyrosine 4–valine 128. The SH3 1 domain maps to methionine 166–glycine 225. Threonine 256 carries the phosphothreonine modification. An SH3 2 domain is found at serine 266–aspartate 325. Residues serine 406 and serine 421 each carry the phosphoserine modification. 4 disordered regions span residues glutamine 415 to proline 446, arginine 505 to glycine 840, asparagine 899 to aspartate 924, and glutamine 941 to proline 964. The 60-residue stretch at serine 448–lysine 507 folds into the SH3 3 domain. A compositionally biased stretch (basic and acidic residues) spans aspartate 546–glutamate 555. Residues serine 547 and serine 567 each carry the phosphoserine modification. Over residues serine 567–valine 576 the composition is skewed to acidic residues. Residues glutamate 577 to proline 586 are compositionally biased toward basic and acidic residues. The residue at position 593 (serine 593) is a Phosphoserine. Acidic residues predominate over residues serine 608–tyrosine 620. 3 stretches are compositionally biased toward low complexity: residues serine 634–leucine 652, proline 658–lysine 670, and serine 686–serine 715. Serine 644 is subject to Phosphoserine. Threonine 731 is modified (phosphothreonine). A phosphoserine mark is found at serine 767, serine 769, and serine 819. A Phosphothreonine modification is found at threonine 829. The SH3 4 domain occupies glycine 840–asparagine 899. A coiled-coil region spans residues arginine 917–threonine 946. Residues serine 1002, serine 1016, serine 1017, and serine 1038 each carry the phosphoserine modification. The tract at residues lysine 1029 to arginine 1059 is disordered. The region spanning asparagine 1072–asparagine 1133 is the SH3 5 domain.

This sequence belongs to the SH3PXD2 family. Interacts (via N-terminus) with CYBA. Interacts with ADAM12, ADAM15 and ADAM19. Interacts with NOXO1. Interacts (via SH3 domains) with NOXA1. Interacts with FASLG. Interacts (via PX domain) with RAB40B (GTP-bound); interaction promotes invadopodia-mediated extracellular matrix degradation. Tyrosine phosphorylated by SRC. Phosphorylation plays a regulatory role in the protein localization. The intramolecular interaction of the PX domain with the third SH3 domain maintains the protein in the cytoplasm and phosphorylation disrupts this interaction, resulting in the redistribution of the protein from cytoplasm to the perimembrane region. Phosphorylated on serine upon DNA damage, probably by ATM or ATR. Found in several cancer cell lines, particularly invasive breast carcinomas and melanomas.

The protein localises to the cytoplasm. The protein resides in the cell projection. It is found in the podosome. Functionally, adapter protein involved in invadopodia and podosome formation, extracellular matrix degradation and invasiveness of some cancer cells. Binds matrix metalloproteinases (ADAMs), NADPH oxidases (NOXs) and phosphoinositides. Acts as an organizer protein that allows NOX1- or NOX3-dependent reactive oxygen species (ROS) generation and ROS localization. In association with ADAM12, mediates the neurotoxic effect of amyloid-beta peptide. The polypeptide is SH3 and PX domain-containing protein 2A (Homo sapiens (Human)).